The following is a 538-amino-acid chain: MFCYQCEQTAKGLGCDKIGVCGKQPDVSDLQDLLVYALTGLAQAAVAAKAEGVAVPLETGRYFAKAMFSTLTNVNFDAADFVPLINEAVAKRKALAALIKAQLPEGPASYVPALDLAGLIAQGHIHGLKDIPETNDDIRSLKHTLIFGIKGIAAYADHAAILGQEDPAVYEFLYEGMAATFTTDKDLGAWVALVLKCGEVNLRAMELLDAANTGAYGHPVPTVVPLGHKAGKAILVSGHDLKDLKQLLEQTAGKGINIYTHGEMLPAHGYPELKKYPHFHGHYGTAWQNQHKEFAAFPGAILMTTNCIQKPAESYLGSIFTTGLVGWPGAVHVKNGEFGPVIEKALAMPGFAADEDKGTVMTGFARNAVMSVAGTVIDAVKAGKIRHFFLVAGCDGAKPGRNYYTEFVEKAPADTIVLTLACGKFRFFDKQLGDIGGIPRLLDMGQCNDAYSAIQVAVALAGAFNCGVNDLPLSMVLSWYEQKAVAILLTLLHLGVKNIRLGPSLPAFLTPNVLNFLVANYDIKPISTPDEDLKAILG.

[4Fe-4S] cluster-binding residues include Cys-3, Cys-6, Cys-15, and Cys-21. The hybrid [4Fe-2O-2S] cluster site is built by His-239, Glu-263, Cys-307, Cys-394, Cys-422, Cys-447, Glu-481, and Lys-483. The residue at position 394 (Cys-394) is a Cysteine persulfide.

This sequence belongs to the HCP family. [4Fe-4S] cluster serves as cofactor. The cofactor is hybrid [4Fe-2O-2S] cluster.

The protein localises to the cytoplasm. The catalysed reaction is A + NH4(+) + H2O = hydroxylamine + AH2 + H(+). Functionally, catalyzes the reduction of hydroxylamine to form NH(3) and H(2)O. This chain is Hydroxylamine reductase, found in Solidesulfovibrio magneticus (strain ATCC 700980 / DSM 13731 / RS-1) (Desulfovibrio magneticus).